The sequence spans 346 residues: 4-hydroxy-2-oxohexanoate aldolase (346 aa).

The region spanning 7 to 259 is the Pyruvate carboxyltransferase domain; it reads VRITDTSLRD…KTGIDFFDIA (253 aa). Residue 15-16 participates in substrate binding; that stretch reads RD. Asp-16 contacts Mn(2+). The active-site Proton acceptor is the His-19. Positions 169 and 198 each coordinate substrate. Mn(2+) contacts are provided by His-198 and His-200. Tyr-289 lines the substrate pocket.

It belongs to the 4-hydroxy-2-oxovalerate aldolase family. As to quaternary structure, homodimer. Forms a heterotetramer composed of two aldolase (HsaF) and two dehydrogenase (HsaG) subunits. Mn(2+) is required as a cofactor.

It catalyses the reaction (S)-4-hydroxy-2-oxohexanoate = propanal + pyruvate. It carries out the reaction (S)-4-hydroxy-2-oxopentanoate = acetaldehyde + pyruvate. In terms of biological role, involved in cholesterol degradation. Catalyzes the retro-aldol cleavage of 4-hydroxy-2-oxohexanoate (HOHA) to pyruvate and propanal. Can also catalyze the cleavage of 4-hydroxy-2-oxopentanoate (HOPA) to pyruvate and acetaldehyde. The aldehydes produced by this reaction are directly channeled to the dehydrogenase HsaG. The sequence is that of 4-hydroxy-2-oxohexanoate aldolase from Mycobacterium bovis (strain ATCC BAA-935 / AF2122/97).